Reading from the N-terminus, the 597-residue chain is Vacuolar protein sorting-associated protein 33A (597 aa).

The protein belongs to the STXBP/unc-18/SEC1 family. As to quaternary structure, core component of at least two putative endosomal tethering complexes, the homotypic fusion and vacuole protein sorting (HOPS) complex and the class C core vacuole/endosome tethering (CORVET) complex. Their common core is composed of the class C Vps proteins VPS11, VPS16, VPS18 and VPS33A, which in HOPS further associates with VPS39 and VPS41 and in CORVET with VPS8 and TGFBRAP1. Interacts with RAB5C, UVRAG, STX17, MON1A and MON1B. Associates with adaptor protein complex 3 (AP-3) and clathrin. Interacts with PLEKHM1. As to expression, ubiquitous.

It is found in the cytoplasmic vesicle. It localises to the late endosome membrane. The protein localises to the lysosome membrane. The protein resides in the early endosome. Its subcellular location is the autophagosome. It is found in the clathrin-coated vesicle. Functionally, plays a role in vesicle-mediated protein trafficking to lysosomal compartments including the endocytic membrane transport and autophagic pathways. Believed to act as a core component of the putative HOPS and CORVET endosomal tethering complexes which are proposed to be involved in the Rab5-to-Rab7 endosome conversion probably implicating MON1A/B, and via binding SNAREs and SNARE complexes to mediate tethering and docking events during SNARE-mediated membrane fusion. The HOPS complex is proposed to be recruited to Rab7 on the late endosomal membrane and to regulate late endocytic, phagocytic and autophagic traffic towards lysosomes. The CORVET complex is proposed to function as a Rab5 effector to mediate early endosome fusion probably in specific endosome subpopulations. Required for fusion of endosomes and autophagosomes with lysosomes; the function is dependent on its association with VPS16 but not VIPAS39. The function in autophagosome-lysosome fusion implicates STX17 but not UVRAG. This chain is Vacuolar protein sorting-associated protein 33A (Vps33a), found in Rattus norvegicus (Rat).